The sequence spans 84 residues: Sec-independent protein translocase protein TatA (84 aa).

A helical membrane pass occupies residues 1–21 (MGGFSIWHWLIVLLIVVMVFG). The disordered stretch occupies residues 40 to 84 (KDGMKDGGQSPADEKPVVPASQVTNAQAADKAERNTIDVEARQKS). A compositionally biased stretch (basic and acidic residues) spans 69-84 (DKAERNTIDVEARQKS).

The protein belongs to the TatA/E family. In terms of assembly, the Tat system comprises two distinct complexes: a TatABC complex, containing multiple copies of TatA, TatB and TatC subunits, and a separate TatA complex, containing only TatA subunits. Substrates initially bind to the TatABC complex, which probably triggers association of the separate TatA complex to form the active translocon.

The protein localises to the cell inner membrane. Its function is as follows. Part of the twin-arginine translocation (Tat) system that transports large folded proteins containing a characteristic twin-arginine motif in their signal peptide across membranes. TatA could form the protein-conducting channel of the Tat system. This Polaromonas naphthalenivorans (strain CJ2) protein is Sec-independent protein translocase protein TatA.